A 46-amino-acid chain; its full sequence is uncharacterized protein (46 aa).

The protein localises to the plastid. It localises to the chloroplast. This is an uncharacterized protein from Trieres chinensis (Marine centric diatom).